A 1413-amino-acid polypeptide reads, in one-letter code: Zinc finger SWIM domain-containing protein 8 (1413 aa).

Residues Ser-36, Ser-48, and Ser-53 each carry the phosphoserine modification. The interval 45 to 65 is disordered; that stretch reads RKQSAGPNSPTGGGGGGGSGG. The span at 55-65 shows a compositional bias: gly residues; that stretch reads TGGGGGGGSGG. The SWIM-type zinc-finger motif lies at 172–208; it reads YNVAVMFDRCRVTSCSCTCGAGAKWCTHVVALCLFRI. A disordered region spans residues 600–817; sequence ESQTHKPQTL…ESHAPHVPNQ (218 aa). Residues 604–625 are compositionally biased toward polar residues; the sequence is HKPQTLSSFYSSSRPATASQRS. The span at 704–715 shows a compositional bias: gly residues; sequence SRGGYNGRGWGS. Residue Thr-724 is modified to Phosphothreonine. The segment covering 729–744 has biased composition (polar residues); it reads IDSSAPETTSDSSPTL. Phosphoserine occurs at positions 738, 741, and 745. Residues 759–794 are compositionally biased toward low complexity; the sequence is GRGQDSDSISSSSSDSLGSSSSSGSRRASASGGARA. Residues 795–811 show a composition bias toward basic and acidic residues; sequence KTVEVGRYKGRRPESHA. A phosphoserine mark is found at Ser-852 and Ser-1412.

The protein belongs to the ZSWIM8 family. In terms of assembly, component of the SCF-like E3 ubiquitin-protein ligase complex which contains CUL3, RBX1, ELOB, ELOC and ZSWIM8. Interacts with DAB1.

It is found in the cytoplasm. The protein resides in the cytosol. The protein operates within protein modification; protein ubiquitination. Its function is as follows. Substrate recognition component of a SCF-like E3 ubiquitin-protein ligase complex that promotes target-directed microRNA degradation (TDMD), a process that mediates degradation of microRNAs (miRNAs). The SCF-like E3 ubiquitin-protein ligase complex acts by catalyzing ubiquitination and subsequent degradation of AGO proteins (AGO1, AGO2, AGO3 and/or AGO4), thereby exposing miRNAs for degradation. Specifically recognizes and binds AGO proteins when they are engaged with a TDMD target. May also acts as a regulator of axon guidance: specifically recognizes misfolded ROBO3 and promotes its ubiquitination and subsequent degradation. Plays an essential role for proper embryonic development of heart and lung. Controls protein quality of DAB1, a key signal molecule for brain development, thus protecting its signaling strength. Mechanistically, recognizes intrinsically disordered regions of DAB1 and eliminates misfolded DAB1 that cannot be properly phosphorylated. This chain is Zinc finger SWIM domain-containing protein 8, found in Bos taurus (Bovine).